A 203-amino-acid chain; its full sequence is Outer-membrane lipoprotein carrier protein (203 aa).

Residues 1–21 form the signal peptide; it reads MKKLLVACCLLSGFASTSVLA.

It belongs to the LolA family. As to quaternary structure, monomer.

The protein localises to the periplasm. Functionally, participates in the translocation of lipoproteins from the inner membrane to the outer membrane. Only forms a complex with a lipoprotein if the residue after the N-terminal Cys is not an aspartate (The Asp acts as a targeting signal to indicate that the lipoprotein should stay in the inner membrane). This chain is Outer-membrane lipoprotein carrier protein, found in Serratia proteamaculans (strain 568).